Reading from the N-terminus, the 430-residue chain is Asparagine--tRNA ligase (430 aa).

It belongs to the class-II aminoacyl-tRNA synthetase family. As to quaternary structure, homodimer.

The protein localises to the cytoplasm. It carries out the reaction tRNA(Asn) + L-asparagine + ATP = L-asparaginyl-tRNA(Asn) + AMP + diphosphate + H(+). The protein is Asparagine--tRNA ligase of Staphylococcus aureus (strain USA300).